Reading from the N-terminus, the 217-residue chain is ATP synthase subunit a (217 aa).

6 helical membrane passes run 5–25 (EHVI…LAAG), 63–83 (LIAS…LPFV), 89–109 (NINT…FEGF), 120–140 (FMGP…MSHL), 157–177 (GAIL…TLAV), and 191–213 (LAIV…GAVV).

This sequence belongs to the ATPase A chain family. As to quaternary structure, F-type ATPases have 2 components, CF(1) - the catalytic core - and CF(0) - the membrane proton channel. CF(1) has five subunits: alpha(3), beta(3), gamma(1), delta(1), epsilon(1). CF(0) has three main subunits: a(1), b(2) and c(9-12). The alpha and beta chains form an alternating ring which encloses part of the gamma chain. CF(1) is attached to CF(0) by a central stalk formed by the gamma and epsilon chains, while a peripheral stalk is formed by the delta and b chains.

The protein resides in the cell inner membrane. In terms of biological role, key component of the proton channel; it plays a direct role in the translocation of protons across the membrane. This Hydrogenobaculum sp. (strain Y04AAS1) protein is ATP synthase subunit a.